A 146-amino-acid polypeptide reads, in one-letter code: Large ribosomal subunit protein uL15 (146 aa).

Positions 1–18 (MKLHELKPAEGSRKERNR) are enriched in basic and acidic residues. Residues 1-54 (MKLHELKPAEGSRKERNRVGRGVATGNGKTSGRGHKGQKARSGGGVRPGFEGGQ) are disordered. The segment covering 42-52 (SGGGVRPGFEG) has biased composition (gly residues).

The protein belongs to the universal ribosomal protein uL15 family. In terms of assembly, part of the 50S ribosomal subunit.

In terms of biological role, binds to the 23S rRNA. This chain is Large ribosomal subunit protein uL15, found in Staphylococcus aureus (strain Mu3 / ATCC 700698).